A 278-amino-acid polypeptide reads, in one-letter code: MAIFKDIAGLRQWRQSLHGTLALVPTMGNLHEGHLALVRLAANRAEHVLVSIYVNPLQFGPGEDFANYPRTLDQDLQRLHEAGCQTVFTPDDGLMYPRGRQDISIVMPPRSLSKVLCGASRPGHFAGVCTVLSKLLHMVAPEILILGEKDYQQLRIVQQMVADLNLNVQVLPGPLQREADGLAYSSRNIYLNLAERQVAPLLAETLFDLARRSTNDAAVSDLAATGWERLERAGFLPEYLELRDAQTLQSLALPQPGARWFAAARLGQIRLIDNVIIS.

27 to 34 is an ATP binding site; sequence MGNLHEGH. H34 (proton donor) is an active-site residue. Q58 contributes to the (R)-pantoate binding site. Residue Q58 participates in beta-alanine binding. 147 to 150 is a binding site for ATP; sequence GEKD. Q153 serves as a coordination point for (R)-pantoate. ATP is bound at residue 184 to 187; that stretch reads YSSR.

It belongs to the pantothenate synthetase family. Homodimer.

It is found in the cytoplasm. It catalyses the reaction (R)-pantoate + beta-alanine + ATP = (R)-pantothenate + AMP + diphosphate + H(+). Its pathway is cofactor biosynthesis; (R)-pantothenate biosynthesis; (R)-pantothenate from (R)-pantoate and beta-alanine: step 1/1. Functionally, catalyzes the condensation of pantoate with beta-alanine in an ATP-dependent reaction via a pantoyl-adenylate intermediate. The sequence is that of Pantothenate synthetase from Acidithiobacillus ferrooxidans (strain ATCC 23270 / DSM 14882 / CIP 104768 / NCIMB 8455) (Ferrobacillus ferrooxidans (strain ATCC 23270)).